The primary structure comprises 433 residues: Enolase (433 aa).

(2R)-2-phosphoglycerate is bound at residue Q164. The Proton donor role is filled by E206. Positions 243, 289, and 316 each coordinate Mg(2+). Residues K341, R370, S371, and K392 each contribute to the (2R)-2-phosphoglycerate site. The Proton acceptor role is filled by K341.

Belongs to the enolase family. The cofactor is Mg(2+).

It localises to the cytoplasm. It is found in the secreted. The protein resides in the cell surface. It carries out the reaction (2R)-2-phosphoglycerate = phosphoenolpyruvate + H2O. It functions in the pathway carbohydrate degradation; glycolysis; pyruvate from D-glyceraldehyde 3-phosphate: step 4/5. Functionally, catalyzes the reversible conversion of 2-phosphoglycerate (2-PG) into phosphoenolpyruvate (PEP). It is essential for the degradation of carbohydrates via glycolysis. The polypeptide is Enolase (Borrelia hermsii (strain HS1 / DAH)).